The sequence spans 310 residues: uncharacterized protein (310 aa).

This is an uncharacterized protein from Methanocaldococcus jannaschii (strain ATCC 43067 / DSM 2661 / JAL-1 / JCM 10045 / NBRC 100440) (Methanococcus jannaschii).